The following is a 267-amino-acid chain: Diphthine--ammonia ligase (267 aa).

A Phosphotyrosine modification is found at tyrosine 97.

Belongs to the Diphthine--ammonia ligase family.

It catalyses the reaction diphthine-[translation elongation factor 2] + NH4(+) + ATP = diphthamide-[translation elongation factor 2] + AMP + diphosphate + H(+). It participates in protein modification; peptidyl-diphthamide biosynthesis. In terms of biological role, amidase that catalyzes the last step of diphthamide biosynthesis using ammonium and ATP. Diphthamide biosynthesis consists in the conversion of an L-histidine residue in the translation elongation factor 2 (EEF2) to diphthamide. This is Diphthine--ammonia ligase (Dph6) from Mus musculus (Mouse).